Consider the following 309-residue polypeptide: Ribonuclease Z (309 aa).

7 residues coordinate Zn(2+): His63, His65, Asp67, His68, His145, Asp216, and His274. The Proton acceptor role is filled by Asp67.

It belongs to the RNase Z family. In terms of assembly, homodimer. It depends on Zn(2+) as a cofactor.

It carries out the reaction Endonucleolytic cleavage of RNA, removing extra 3' nucleotides from tRNA precursor, generating 3' termini of tRNAs. A 3'-hydroxy group is left at the tRNA terminus and a 5'-phosphoryl group is left at the trailer molecule.. Its function is as follows. Zinc phosphodiesterase, which displays some tRNA 3'-processing endonuclease activity. Probably involved in tRNA maturation, by removing a 3'-trailer from precursor tRNA. The chain is Ribonuclease Z from Streptococcus thermophilus (strain CNRZ 1066).